Reading from the N-terminus, the 149-residue chain is MEVIAENRKARFEYFILEEFEAGMVLLSSEVKSLRERKVNISDAYVVEKNSEVWLHNMHIAEYKAANRKNHKPKRERKLLLHKKEINKLIGQIKTAGITVVPLSVYFNDKGFAKTKIAIVKGKKLYDKRATIKQREWDREKSRLSKNNL.

This sequence belongs to the SmpB family.

It is found in the cytoplasm. In terms of biological role, required for rescue of stalled ribosomes mediated by trans-translation. Binds to transfer-messenger RNA (tmRNA), required for stable association of tmRNA with ribosomes. tmRNA and SmpB together mimic tRNA shape, replacing the anticodon stem-loop with SmpB. tmRNA is encoded by the ssrA gene; the 2 termini fold to resemble tRNA(Ala) and it encodes a 'tag peptide', a short internal open reading frame. During trans-translation Ala-aminoacylated tmRNA acts like a tRNA, entering the A-site of stalled ribosomes, displacing the stalled mRNA. The ribosome then switches to translate the ORF on the tmRNA; the nascent peptide is terminated with the 'tag peptide' encoded by the tmRNA and targeted for degradation. The ribosome is freed to recommence translation, which seems to be the essential function of trans-translation. The polypeptide is SsrA-binding protein (Wolbachia pipientis wMel).